Consider the following 213-residue polypeptide: Urease accessory protein UreE (213 aa).

Positions 170 to 213 (EHHGHSHSHSHSHSHDHDHDHDHDHDHDHQHGPSCSHGHHHGHR) are disordered. A compositionally biased stretch (basic and acidic residues) spans 182-200 (HSHDHDHDHDHDHDHDHQH).

Belongs to the UreE family.

It is found in the cytoplasm. Its function is as follows. Involved in urease metallocenter assembly. Binds nickel. Probably functions as a nickel donor during metallocenter assembly. In Burkholderia mallei (strain NCTC 10229), this protein is Urease accessory protein UreE.